A 180-amino-acid chain; its full sequence is Cytidylate kinase (180 aa).

7–15 (GLPGSGTTT) contacts ATP.

It belongs to the cytidylate kinase family. Type 2 subfamily.

Its subcellular location is the cytoplasm. The enzyme catalyses CMP + ATP = CDP + ADP. It catalyses the reaction dCMP + ATP = dCDP + ADP. This is Cytidylate kinase from Methanosarcina barkeri (strain Fusaro / DSM 804).